A 126-amino-acid polypeptide reads, in one-letter code: Holo-[acyl-carrier-protein] synthase (126 aa).

Mg(2+) is bound by residues Asp-9 and Glu-58.

Belongs to the P-Pant transferase superfamily. AcpS family. Requires Mg(2+) as cofactor.

Its subcellular location is the cytoplasm. The catalysed reaction is apo-[ACP] + CoA = holo-[ACP] + adenosine 3',5'-bisphosphate + H(+). Transfers the 4'-phosphopantetheine moiety from coenzyme A to a Ser of acyl-carrier-protein. The polypeptide is Holo-[acyl-carrier-protein] synthase (Buchnera aphidicola subsp. Cinara cedri (strain Cc)).